A 209-amino-acid chain; its full sequence is Egg case collagen (209 aa).

Positions 1 to 129 are nonhelical region; that stretch reads VYMSGXGKPP…YKGNHGFYLV (129 aa). The triple-helical region stretch occupies residues 130–209; the sequence is LPAGYPGTPG…DPGLPGEYGV (80 aa). Positions 138–209 are disordered; that stretch reads PGTPGPRGGP…DPGLPGEYGV (72 aa). The segment covering 142 to 162 has biased composition (gly residues); it reads GPRGGPGDPGMPGEPGVGFPG.

Functionally, major component of the egg case wall which is secreted by the oviduct. The egg case combines mechanical strength and toughness with high permeability to small molecules and ions. The sequence is that of Egg case collagen from Scyliorhinus canicula (Small-spotted catshark).